Reading from the N-terminus, the 97-residue chain is Aspartyl/glutamyl-tRNA(Asn/Gln) amidotransferase subunit C (97 aa).

This sequence belongs to the GatC family. Heterotrimer of A, B and C subunits.

It carries out the reaction L-glutamyl-tRNA(Gln) + L-glutamine + ATP + H2O = L-glutaminyl-tRNA(Gln) + L-glutamate + ADP + phosphate + H(+). The catalysed reaction is L-aspartyl-tRNA(Asn) + L-glutamine + ATP + H2O = L-asparaginyl-tRNA(Asn) + L-glutamate + ADP + phosphate + 2 H(+). Functionally, allows the formation of correctly charged Asn-tRNA(Asn) or Gln-tRNA(Gln) through the transamidation of misacylated Asp-tRNA(Asn) or Glu-tRNA(Gln) in organisms which lack either or both of asparaginyl-tRNA or glutaminyl-tRNA synthetases. The reaction takes place in the presence of glutamine and ATP through an activated phospho-Asp-tRNA(Asn) or phospho-Glu-tRNA(Gln). This is Aspartyl/glutamyl-tRNA(Asn/Gln) amidotransferase subunit C from Nostoc punctiforme (strain ATCC 29133 / PCC 73102).